The sequence spans 860 residues: RNA-dependent RNA polymerase (860 aa).

Residues 839 to 860 (PFSSSESDEPRAKEIGPNRGPE) are disordered. A compositionally biased stretch (basic and acidic residues) spans 846-860 (DEPRAKEIGPNRGPE).

It belongs to the ssRNA positive-strand viruses RNA-directed RNA polymerase family.

The catalysed reaction is RNA(n) + a ribonucleoside 5'-triphosphate = RNA(n+1) + diphosphate. Functionally, RNA-dependent RNA polymerase which replicates the viral genome. In Ourmia melon virus (isolate Melon/Iran/VE9) (OuMV), this protein is RNA-dependent RNA polymerase.